The chain runs to 309 residues: Mitochondrial brown fat uncoupling protein 1 (309 aa).

Residues 2–10 (VGHTESDVP) are Mitochondrial intermembrane-facing. Residues 11-32 (PTMAVKIFSAGVAACVADIITF) form a helical membrane-spanning segment. Solcar repeat units lie at residues 11 to 106 (PTMA…VQEF), 113 to 203 (ASLG…MKEA), and 212 to 297 (DDVP…LKQE). At 33–77 (PLDTAKVRLQVGSAIQGECLISSAIRYKGVLGTIITLAKTEGPVK) the chain is on the mitochondrial matrix side. Lys-60 contacts fatty acid 16:0. A helical transmembrane segment spans residues 78–100 (LYSGLPAGLQRQISFASLRIGLY). At 101 to 118 (DTVQEFFTTGKEASLGSK) the chain is on the mitochondrial intermembrane side. The helical transmembrane segment at 119 to 135 (ISAGLMTGGVAVFIGQP) threads the bilayer. The Mitochondrial matrix segment spans residues 136–180 (TEVVKVRLQAQSHLHGPKPRYTGTYNAYRIIATTEGLTGLWKGTT). Residues 181-197 (PNLTRNVIINCTELVTY) traverse the membrane as a helical segment. At 198–214 (DLMKEALVKNKLLADDV) the chain is on the mitochondrial intermembrane side. A helical membrane pass occupies residues 215–234 (PCHFVSAVVAGFCTTVLSSP). Topologically, residues 235–268 (VDVVKTRFVNSSPGQYTSVPNCAMMMLTREGPSA) are mitochondrial matrix. A Cysteine sulfenic acid (-SOH) modification is found at Cys-256. The chain crosses the membrane as a helical span at residues 269 to 291 (FFKGFVPSFLRLGSWNIIMFVCF). Residue Lys-271 coordinates fatty acid 16:0. Residues 292-309 (EQLKQELMKSRHTMDCAT) are Mitochondrial intermembrane-facing.

It belongs to the mitochondrial carrier (TC 2.A.29) family. Most probably functions as a monomer. Binds one purine nucleotide per monomer. However, has also been suggested to function as a homodimer or a homotetramer. Tightly associates with cardiolipin in the mitochondrion inner membrane; may stabilize and regulate its activity. Post-translationally, may undergo sulfenylation upon cold exposure. May increase the sensitivity of UCP1 thermogenic function to the activation by noradrenaline probably through structural effects. May undergo ubiquitin-mediated proteasomal degradation.

It localises to the mitochondrion inner membrane. The enzyme catalyses H(+)(in) = H(+)(out). Its activity is regulated as follows. Has no constitutive proton transporter activity and has to be activated by long-chain fatty acids/LCFAs. Inhibited by purine nucleotides. Both purine nucleotides and LCFAs bind the cytosolic side of the transporter and directly compete to activate or inhibit it. Activated by noradrenaline and reactive oxygen species. Despite lacking canonical translational encoding for selenocysteine, a small pool of the protein has been observed to selectively incorporate selenocysteine at 'Cys-256'. Selenocysteine-modified protein is highly sensitive to redox modification and may constitute a pool of protein highly sensitive to activation by elevated levels of reactive oxygen species (ROS). Its function is as follows. Mitochondrial protein responsible for thermogenic respiration, a specialized capacity of brown adipose tissue and beige fat that participates in non-shivering adaptive thermogenesis to temperature and diet variations and more generally to the regulation of energy balance. Functions as a long-chain fatty acid/LCFA and proton symporter, simultaneously transporting one LCFA and one proton through the inner mitochondrial membrane. However, LCFAs remaining associated with the transporter via their hydrophobic tails, it results in an apparent transport of protons activated by LCFAs. Thereby, dissipates the mitochondrial proton gradient and converts the energy of substrate oxydation into heat instead of ATP. Regulates the production of reactive oxygen species/ROS by mitochondria. The chain is Mitochondrial brown fat uncoupling protein 1 from Bos taurus (Bovine).